The primary structure comprises 212 residues: MNSKQCVVIAIAGASASGKSLIAKTIYEELCRDLGTDQIGVIAEDAYYRDQGHLSMDERVLTNYDHPKALDHELLCQHLQALKDGNPVDIPVYSYTEHTRTDEKVNLTPKKVIILEGILLLTDPALRDQMDASVFMDTPLDICFMRRLSRDVAERGRTMESVMSQYTETVRPMFLQFIEPSKQYADIIVPRGGKNRIATDILKARIQHLLAK.

Position 13–20 (13–20) interacts with ATP; it reads GASASGKS.

It belongs to the uridine kinase family.

It localises to the cytoplasm. The enzyme catalyses uridine + ATP = UMP + ADP + H(+). It catalyses the reaction cytidine + ATP = CMP + ADP + H(+). It participates in pyrimidine metabolism; CTP biosynthesis via salvage pathway; CTP from cytidine: step 1/3. The protein operates within pyrimidine metabolism; UMP biosynthesis via salvage pathway; UMP from uridine: step 1/1. This is Uridine kinase from Shewanella piezotolerans (strain WP3 / JCM 13877).